Consider the following 374-residue polypeptide: MEPLYEEILTQGGTIVKPYYWLSLSLGCTNCPYHIRTGEEARVPYTEFHQTFGFPWSTYPQTKHLTFYELRSSSKNLIQKGLASNCTGSHNHPEAMLFEKNGYLDAVIFHNSNIRHIILYSNNSPCNEAKHCCISKMYNFLMNYPEVTLSVFFSQLYHTEKQFPTSAWNRKALQSLASLWPQVTLSPICGGLWHAILEKFVSNISGSTVPQPFIAGRILADRYNTYEINSIIAAKPYFTDGLLSRQKENQNREAWAAFEKHPLGSAAPAQRQPTRGQDPRTPAVLMLVSNRDLPPIHVGSTPQKPRTVVRHLNMLQLSSFKVKDVKKPPSGRPVEEVEVMKESARSQKANKKNRSQWKKQTLVIKPRICRLLER.

In terms of domain architecture, CMP/dCMP-type deaminase spans P60–L176. H92 contacts Zn(2+). Residue E94 is the Proton donor of the active site. C126 and C133 together coordinate Zn(2+). Residues E259–R280 are disordered.

Belongs to the cytidine and deoxycytidylate deaminase family. Zn(2+) is required as a cofactor. Predominantly expressed in testis.

In terms of biological role, putative C to U editing enzyme whose physiological substrate is not yet known. The chain is Putative C-&gt;U-editing enzyme APOBEC-4 (Apobec4) from Mus musculus (Mouse).